Reading from the N-terminus, the 285-residue chain is MQLIEKAPAKINLSLDALYQHTDGEFEWQMIMTSIDLADYVQITLQDSPQIEVRTSKGYLPEDKRNLAYQAAQLLRHRFDIKTGAIIEIDKHIPVAAGLGGGSSDAAAVLRGLNQLWHLGLTEAELAHIGLSIDSDVPYCVYSETALVTGKGDQIQPLGDLPNFWMVVVKPEVSVSTPRILHALNCDQITDRPQTDRLLAGIQQQDAQQMTAAMANVLTPITNQRYPQIDYLMQRLTAFGAEKAQMSGSGPTVFGICRQYSRAQRIYNSMSGFCREVYLVQPLKK.

The active site involves lysine 10. Residue 94 to 104 (PVAAGLGGGSS) coordinates ATP. Residue aspartate 136 is part of the active site.

It belongs to the GHMP kinase family. IspE subfamily.

It carries out the reaction 4-CDP-2-C-methyl-D-erythritol + ATP = 4-CDP-2-C-methyl-D-erythritol 2-phosphate + ADP + H(+). The protein operates within isoprenoid biosynthesis; isopentenyl diphosphate biosynthesis via DXP pathway; isopentenyl diphosphate from 1-deoxy-D-xylulose 5-phosphate: step 3/6. Functionally, catalyzes the phosphorylation of the position 2 hydroxy group of 4-diphosphocytidyl-2C-methyl-D-erythritol. The polypeptide is 4-diphosphocytidyl-2-C-methyl-D-erythritol kinase (Latilactobacillus sakei subsp. sakei (strain 23K) (Lactobacillus sakei subsp. sakei)).